The sequence spans 89 residues: Small ribosomal subunit protein uS15 (89 aa).

Residues 1–10 (MSITAEKKQE) are compositionally biased toward basic and acidic residues. The interval 1–24 (MSITAEKKQEVIQSNARAEGDTGS) is disordered.

This sequence belongs to the universal ribosomal protein uS15 family. Part of the 30S ribosomal subunit. Forms a bridge to the 50S subunit in the 70S ribosome, contacting the 23S rRNA.

One of the primary rRNA binding proteins, it binds directly to 16S rRNA where it helps nucleate assembly of the platform of the 30S subunit by binding and bridging several RNA helices of the 16S rRNA. Its function is as follows. Forms an intersubunit bridge (bridge B4) with the 23S rRNA of the 50S subunit in the ribosome. The polypeptide is Small ribosomal subunit protein uS15 (Novosphingobium aromaticivorans (strain ATCC 700278 / DSM 12444 / CCUG 56034 / CIP 105152 / NBRC 16084 / F199)).